The primary structure comprises 159 residues: MPSFDVVSELDKHEVTNAVDNAIKELDRRYDLKGKGTFEFKELTVTLTAEADFQLEAMIEILKLALVKRKIDGKCLEVKDAYASGKLMKQEAVLREGIDKELAKKIVAHVKEAKLKVQAAIQGEQVRITGKKRDDLQEAIAALRAYDSGMPLQFNNFRD.

Belongs to the YajQ family.

In terms of biological role, nucleotide-binding protein. In Pseudomonas syringae pv. tomato (strain ATCC BAA-871 / DC3000), this protein is Nucleotide-binding protein PSPTO_4393.